Reading from the N-terminus, the 315-residue chain is Methionyl-tRNA formyltransferase (315 aa).

Residue 113–116 participates in (6S)-5,6,7,8-tetrahydrofolate binding; that stretch reads SLLP.

Belongs to the Fmt family.

The enzyme catalyses L-methionyl-tRNA(fMet) + (6R)-10-formyltetrahydrofolate = N-formyl-L-methionyl-tRNA(fMet) + (6S)-5,6,7,8-tetrahydrofolate + H(+). In terms of biological role, attaches a formyl group to the free amino group of methionyl-tRNA(fMet). The formyl group appears to play a dual role in the initiator identity of N-formylmethionyl-tRNA by promoting its recognition by IF2 and preventing the misappropriation of this tRNA by the elongation apparatus. In Escherichia fergusonii (strain ATCC 35469 / DSM 13698 / CCUG 18766 / IAM 14443 / JCM 21226 / LMG 7866 / NBRC 102419 / NCTC 12128 / CDC 0568-73), this protein is Methionyl-tRNA formyltransferase.